Here is a 525-residue protein sequence, read N- to C-terminus: Coronin-2A (525 aa).

WD repeat units lie at residues 24–71 (NCYD…TGKL), 72–122 (DPHY…RNLT), 123–170 (AYRK…SVIT), 171–214 (SPMS…AGTV), 215–259 (LQEA…DNLS), 260–305 (VPLM…ADKP), and 306–342 (HLSY…RFYK). A coiled-coil region spans residues 485 to 524 (QMFYRQQEEIRRLRELLTQREVQAKQLELEIKNLRMGSEQ).

Belongs to the WD repeat coronin family. As to quaternary structure, binds actin. Component of the N-Cor repressor complex, at least composed of NCOR1, NCOR2, HDAC3, TBL1X, TBL1R, CORO2A and GPS2.

The protein is Coronin-2A (CORO2A) of Homo sapiens (Human).